Reading from the N-terminus, the 309-residue chain is Mitochondrial fission regulator 1-like (309 aa).

Positions 189–221 (DVTEEDEEEEEEEDREEEEEDVSELVPDPMPPV) are disordered. Positions 190 to 211 (VTEEDEEEEEEEDREEEEEDVS) are enriched in acidic residues. Serine 253 bears the Phosphoserine mark.

The protein belongs to the MTFR1 family.

It is found in the mitochondrion outer membrane. Its function is as follows. Mitochondrial protein required for adaptation of miochondrial dynamics to metabolic changes. Regulates mitochondrial morphology at steady state and mediates AMPK-dependent stress-induced mitochondrial fragmentation via the control of OPA1 levels. In Danio rerio (Zebrafish), this protein is Mitochondrial fission regulator 1-like (mtfr1l).